The chain runs to 226 residues: Ribosomal RNA small subunit methyltransferase G (226 aa).

Residues glycine 95, leucine 100, 146–147 (VE), and arginine 159 each bind S-adenosyl-L-methionine.

The protein belongs to the methyltransferase superfamily. RNA methyltransferase RsmG family.

It is found in the cytoplasm. It carries out the reaction guanosine(527) in 16S rRNA + S-adenosyl-L-methionine = N(7)-methylguanosine(527) in 16S rRNA + S-adenosyl-L-homocysteine. Functionally, specifically methylates the N7 position of guanine in position 527 of 16S rRNA. The protein is Ribosomal RNA small subunit methyltransferase G of Acidovorax ebreus (strain TPSY) (Diaphorobacter sp. (strain TPSY)).